The chain runs to 355 residues: Erythronate-4-phosphate dehydrogenase (355 aa).

Substrate is bound by residues Ser45 and Thr66. Asp146 is an NAD(+) binding site. The active site involves Arg206. Asp229 is an NAD(+) binding site. Glu234 is an active-site residue. His251 (proton donor) is an active-site residue. An NAD(+)-binding site is contributed by Gly254. Tyr255 is a substrate binding site.

Belongs to the D-isomer specific 2-hydroxyacid dehydrogenase family. PdxB subfamily. In terms of assembly, homodimer.

The protein localises to the cytoplasm. The catalysed reaction is 4-phospho-D-erythronate + NAD(+) = (R)-3-hydroxy-2-oxo-4-phosphooxybutanoate + NADH + H(+). It participates in cofactor biosynthesis; pyridoxine 5'-phosphate biosynthesis; pyridoxine 5'-phosphate from D-erythrose 4-phosphate: step 2/5. Functionally, catalyzes the oxidation of erythronate-4-phosphate to 3-hydroxy-2-oxo-4-phosphonooxybutanoate. This is Erythronate-4-phosphate dehydrogenase from Acinetobacter baumannii (strain ATCC 17978 / DSM 105126 / CIP 53.77 / LMG 1025 / NCDC KC755 / 5377).